The primary structure comprises 346 residues: fMet-Leu-Phe receptor (346 aa).

N-linked (GlcNAc...) asparagine glycans are attached at residues asparagine 1 and asparagine 7. Over 1-24 (NSSLPTNISGGTPAVSAGYLFLDI) the chain is Extracellular. Residues 25–47 (ITYLVFAVTFVLGVLGNGLVIWV) form a helical membrane-spanning segment. Over 48–58 (AGFRMRHTVTT) the chain is Cytoplasmic. The chain crosses the membrane as a helical span at residues 59–80 (ISYLNLAVADFCFTSTLPFLMV). Over 81–97 (VKVMRGHWPFGWFLCKF) the chain is Extracellular. Cysteine 95 and cysteine 173 form a disulfide bridge. A helical membrane pass occupies residues 98–118 (IFTIVDINLFGSVFLIALIAL). Residues 119-137 (DRCVCVLHPVWTQNHRTVS) are Cytoplasmic-facing. The chain crosses the membrane as a helical span at residues 138 to 159 (LAKKVIIGPWVMALLLTLPVII). The Extracellular segment spans residues 160 to 202 (RVTTVPGKTGTVACTFDFSPWTNDPVEKLKVTIAMLTVRGIIR). The helical transmembrane segment at 203 to 223 (FIIGFSVPMSIVAVSYGLIAT) threads the bilayer. The Cytoplasmic segment spans residues 224 to 239 (KIHKQGLIKSSRPLRV). Residues 240–263 (LSFVVAAFFLCWSPYQVVAFIATV) form a helical membrane-spanning segment. Topologically, residues 264–282 (RLRNILQGLSKELRIAVDA) are extracellular. Residues 283–302 (TSALAFFNSCLNPMLYVFMG) traverse the membrane as a helical segment. At 303–346 (QDFRERLIHSLPTSLERALTEDSAQTSDTATNSTLPSAEVPLQA) the chain is on the cytoplasmic side. Residues 321–346 (LTEDSAQTSDTATNSTLPSAEVPLQA) form a disordered region. Polar residues predominate over residues 324 to 338 (DSAQTSDTATNSTLP).

Belongs to the G-protein coupled receptor 1 family. Post-translationally, phosphorylated; which is necessary for desensitization.

It is found in the cell membrane. In terms of biological role, high affinity receptor for N-formyl-methionyl peptides (fMLP), which are powerful neutrophil chemotactic factors. Binding of fMLP to the receptor stimulates intracellular calcium mobilization and superoxide anion release. This response is mediated via a G-protein that activates a phosphatidylinositol-calcium second messenger system. Receptor for TAFA4, mediates its effects on chemoattracting macrophages, promoting phagocytosis and increasing ROS release. Receptor for cathepsin CTSG, leading to increased phagocyte chemotaxis. The protein is fMet-Leu-Phe receptor (FPR1) of Macaca mulatta (Rhesus macaque).